The primary structure comprises 421 residues: E3 ubiquitin protein ligase DRIP1 (421 aa).

Residues 16–57 (CSICDNILRDATTISECLHTFCRKCIYEKITEDEIETCPVCN) form an RING-type zinc finger. 2 stretches are compositionally biased toward polar residues: residues 106-121 (ISSL…AQAG) and 157-172 (ESTS…TQNK). 2 disordered regions span residues 106–198 (ISSL…WDSK) and 216–307 (PLKS…QERR). The span at 178 to 198 (SCKESISNKENKDGDEPWDSK) shows a compositional bias: basic and acidic residues. The span at 218–227 (KSSASQGSGS) shows a compositional bias: low complexity. The segment covering 244–253 (TKTKNKKRKC) has biased composition (basic residues). Positions 262–271 (NGDPTTSETV) are enriched in polar residues. Basic residues predominate over residues 274-284 (KRMRTTQRKRS). The span at 285–294 (ATTLGDSRNL) shows a compositional bias: polar residues.

In terms of assembly, interacts with DREB2A. In terms of processing, autoubiquitinated. In terms of tissue distribution, expressed in roots, leaves and flowers.

It is found in the nucleus. The catalysed reaction is S-ubiquitinyl-[E2 ubiquitin-conjugating enzyme]-L-cysteine + [acceptor protein]-L-lysine = [E2 ubiquitin-conjugating enzyme]-L-cysteine + N(6)-ubiquitinyl-[acceptor protein]-L-lysine.. Its pathway is protein modification; protein ubiquitination. Functionally, E3 ubiquitin-protein ligase that acts as a negative regulator of the response to water stress. Mediates ubiquitination and subsequent proteasomal degradation of the drought-induced transcriptional activator DREB2A. Functionally redundant with DRIP2. This chain is E3 ubiquitin protein ligase DRIP1 (DRIP1), found in Arabidopsis thaliana (Mouse-ear cress).